The sequence spans 380 residues: Cystathionine beta-lyase (380 aa).

Lys196 is modified (N6-(pyridoxal phosphate)lysine).

This sequence belongs to the trans-sulfuration enzymes family. Pyridoxal 5'-phosphate is required as a cofactor.

It localises to the cytoplasm. The enzyme catalyses L,L-cystathionine + H2O = L-homocysteine + pyruvate + NH4(+). It catalyses the reaction an S-substituted L-cysteine + H2O = a thiol + pyruvate + NH4(+). It participates in amino-acid biosynthesis; L-methionine biosynthesis via de novo pathway; L-homocysteine from L-cystathionine: step 1/1. In terms of biological role, the enzymatic degradation of amino acids in cheese is believed to generate aroma compounds and therefore to be essential for flavor development. Cystathionine beta-lyase (CBL) can convert cystathionine to homocysteine but is also able to catalyze an alpha, gamma elimination. With methionine as a substrate, it produces volatile sulfur compounds which are important for flavor formation in Gouda cheese. This chain is Cystathionine beta-lyase (metC), found in Lactococcus lactis subsp. cremoris (Streptococcus cremoris).